The primary structure comprises 483 residues: Isocitrate dehydrogenase [NADP] (483 aa).

NADP(+) is bound at residue Thr-74. D-threo-isocitrate contacts are provided by Ser-83, Asn-85, Arg-89, Arg-99, and Arg-121. Asp-232 contacts Mg(2+). NADP(+) contacts are provided by residues 264–270 (HGSAPDI) and Asn-277.

The protein belongs to the isocitrate and isopropylmalate dehydrogenases family. In terms of assembly, homodimer. Requires Mg(2+) as cofactor. It depends on Mn(2+) as a cofactor.

The enzyme catalyses D-threo-isocitrate + NADP(+) = 2-oxoglutarate + CO2 + NADPH. In terms of biological role, catalyzes the oxidative decarboxylation of isocitrate to 2-oxoglutarate and carbon dioxide with the concomitant reduction of NADP(+). The chain is Isocitrate dehydrogenase [NADP] (icd) from Rickettsia bellii (strain RML369-C).